The primary structure comprises 194 residues: PPE family protein PPE41 (194 aa).

Belongs to the mycobacterial PPE family. Forms a heterodimer with PE25. The dimer forms a 1:1:1 heterotrimeric complex with EspG5. PPE41 interacts directly with EspG5.

The protein resides in the secreted. Its subcellular location is the cell surface. Functionally, the PE25/PPE41 dimer induces both a strong humoral and cellular immune response. The dimer induces necrosis, but not apoptosis, in mouse macrophage cells. It also induces activation and maturation of mouse dendritic cells and drives Th2-biased immune responses. The polypeptide is PPE family protein PPE41 (Mycobacterium tuberculosis (strain ATCC 25618 / H37Rv)).